Reading from the N-terminus, the 98-residue chain is DNA-binding protein Fis (98 aa).

A DNA-binding region (H-T-H motif) is located at residues 74–93 (QTRAALMMGINRGTLRKKLK).

This sequence belongs to the transcriptional regulatory Fis family. Homodimer.

In terms of biological role, activates ribosomal RNA transcription. Plays a direct role in upstream activation of rRNA promoters. In Enterobacter sp. (strain 638), this protein is DNA-binding protein Fis.